The following is a 367-amino-acid chain: S-adenosylmethionine:tRNA ribosyltransferase-isomerase (367 aa).

The disordered stretch occupies residues 150-182 (RHGEEEESSDEAISSQNPEIATESKRTPSNDDK). Residues 171 to 182 (TESKRTPSNDDK) are compositionally biased toward basic and acidic residues.

It belongs to the QueA family. As to quaternary structure, monomer.

The protein resides in the cytoplasm. It catalyses the reaction 7-aminomethyl-7-carbaguanosine(34) in tRNA + S-adenosyl-L-methionine = epoxyqueuosine(34) in tRNA + adenine + L-methionine + 2 H(+). The protein operates within tRNA modification; tRNA-queuosine biosynthesis. Functionally, transfers and isomerizes the ribose moiety from AdoMet to the 7-aminomethyl group of 7-deazaguanine (preQ1-tRNA) to give epoxyqueuosine (oQ-tRNA). This chain is S-adenosylmethionine:tRNA ribosyltransferase-isomerase, found in Rickettsia felis (strain ATCC VR-1525 / URRWXCal2) (Rickettsia azadi).